The sequence spans 442 residues: Hydroxycinnamoyltransferase 2 (442 aa).

Residues His-159 and Asp-389 each act as proton acceptor in the active site.

Belongs to the plant acyltransferase family. In terms of tissue distribution, expressed in roots and leaves. Expressed at low levels in stems and seeds.

In terms of biological role, hydroxycinnamoyl transferase that catalyzes the transfer of an acyl from p-coumaryol-CoA to various acyl acceptors. Can use feruloyl-CoA and caffeoyl-CoA as acyl donors. The sequence is that of Hydroxycinnamoyltransferase 2 from Oryza sativa subsp. japonica (Rice).